Reading from the N-terminus, the 557-residue chain is Calcium-dependent protein kinase 4 (557 aa).

Residues 1 to 72 form a disordered region; the sequence is MGNTCRGSIG…LVSPRKASMN (72 aa). The N-myristoyl glycine moiety is linked to residue Gly-2. Residues 15-27 show a composition bias toward polar residues; that stretch reads QGYTQPEDSSCST. Over residues 28–48 the composition is skewed to low complexity; that stretch reads NHNPSSGNSYSSSDNFSPTSN. The 259-residue stretch at 94–352 folds into the Protein kinase domain; the sequence is YTLGRKLGQG…AHEVLCHPWI (259 aa). ATP-binding positions include 100-108 and Lys-123; that span reads LGQGQFGTT. Asp-218 functions as the Proton acceptor in the catalytic mechanism. The tract at residues 358–388 is autoinhibitory domain; that stretch reads APDRALDPAVLSRLKQFSAMNKLKKMALRVI. 4 consecutive EF-hand domains span residues 395–430, 431–466, 467–502, and 506–536; these read EEIA…YGST, LKDT…LNKL, EREE…HNMT, and FEDI…GNPC. Positions 408, 410, 412, 419, 444, 446, 448, 450, 455, 480, 482, 484, 486, 491, 514, 516, 518, 520, and 525 each coordinate Ca(2+).

It belongs to the protein kinase superfamily. Ser/Thr protein kinase family. CDPK subfamily.

It localises to the membrane. The catalysed reaction is L-seryl-[protein] + ATP = O-phospho-L-seryl-[protein] + ADP + H(+). The enzyme catalyses L-threonyl-[protein] + ATP = O-phospho-L-threonyl-[protein] + ADP + H(+). Activated by calcium. Autophosphorylation may play an important role in the regulation of the kinase activity. In terms of biological role, regulates the production of reactive oxygen species (ROS) by NADPH oxidase. This Solanum tuberosum (Potato) protein is Calcium-dependent protein kinase 4 (CPK4).